Reading from the N-terminus, the 493-residue chain is Glutamate--tRNA ligase (493 aa).

The 'HIGH' region signature appears at 10–20 (PSPTGDPHVGT). Residues 251 to 255 (KLSKR) carry the 'KMSKS' region motif. Lys254 lines the ATP pocket.

This sequence belongs to the class-I aminoacyl-tRNA synthetase family. Glutamate--tRNA ligase type 1 subfamily. As to quaternary structure, monomer.

The protein localises to the cytoplasm. The enzyme catalyses tRNA(Glu) + L-glutamate + ATP = L-glutamyl-tRNA(Glu) + AMP + diphosphate. Catalyzes the attachment of glutamate to tRNA(Glu) in a two-step reaction: glutamate is first activated by ATP to form Glu-AMP and then transferred to the acceptor end of tRNA(Glu). In Pseudomonas syringae pv. syringae (strain B728a), this protein is Glutamate--tRNA ligase.